We begin with the raw amino-acid sequence, 827 residues long: Striatin homolog (827 aa).

The stretch at 37 to 109 (RAHWISEKAE…VEEEEEEDDK (73 aa)) forms a coiled coil. Disordered regions lie at residues 99-123 (KVEE…SKDN), 181-270 (KDIN…QLQS), 311-362 (SSVS…DEQS), and 400-459 (EEGN…SELM). Residues 109 to 123 (KIPKNREPPKKSKDN) show a composition bias toward basic and acidic residues. Composition is skewed to low complexity over residues 184 to 270 (NNNN…QLQS) and 311 to 334 (SSVS…TSKQ). Polar residues predominate over residues 337–346 (EDPNNVTISK). Composition is skewed to low complexity over residues 347–356 (QQQQEQQQQQ), 416–432 (TPTT…STGS), and 439–453 (SSSS…NSNT). WD repeat units follow at residues 495-534 (SHFD…PTKK), 548-593 (GHTG…IDSY), 610-649 (GHQD…QLYT), 709-748 (NNNS…VVHS), 751-790 (AHSN…CIQD), and 797-827 (KYDE…RILN).

This sequence belongs to the WD repeat striatin family. As to quaternary structure, part of the core of STRIPAK complexes.

The protein resides in the cytoplasm. It is found in the membrane. Functionally, calmodulin-binding scaffolding protein which is the center of the striatin-interacting phosphatase and kinase (STRIPAK) complexes. STRIPAK complexes have critical roles in protein (de)phosphorylation and are regulators of multiple signaling pathways including Hippo, MAPK, nuclear receptor and cytoskeleton remodeling. Different types of STRIPAK complexes are involved in a variety of biological processes such as cell growth, differentiation, apoptosis, metabolism and immune regulation. The polypeptide is Striatin homolog (strn) (Dictyostelium discoideum (Social amoeba)).